The primary structure comprises 277 residues: MEMO1 family protein TM_0087 (277 aa).

It belongs to the MEMO1 family.

This is MEMO1 family protein TM_0087 from Thermotoga maritima (strain ATCC 43589 / DSM 3109 / JCM 10099 / NBRC 100826 / MSB8).